Reading from the N-terminus, the 365-residue chain is Phosphatidylcholine:ceramide cholinephosphotransferase 2 (365 aa).

Positions 9–50 are disordered; sequence LEGHLESQTNNSTNTYTSPTEAVEEEDKNGKGKPKTLSNGLR. The segment covering 15 to 28 has biased composition (low complexity); it reads SQTNNSTNTYTSPT. 5 helical membrane-spanning segments follow: residues 80 to 100, 128 to 148, 159 to 179, 219 to 239, and 248 to 268; these read GIAFVYALFNLILTTVMITVV, FSVSEINGMVLVGLWLTQWLF, FFFIMGTLYLYRCITMYVTTL, ILCGDFLFSGHTVVLTLTYLF, and FWWYHLVCWLLSAAGIICILV. The active site involves His229. Catalysis depends on residues His272 and Asp276. The helical transmembrane segment at 273–290 threads the bilayer; the sequence is YTVDVIIAYYITTRLFWW. At 291 to 365 the chain is on the cytoplasmic side; sequence YHSMANEKNL…KIGEDNEKST (75 aa). 4 S-palmitoyl cysteine lipidation sites follow: Cys331, Cys332, Cys343, and Cys348.

The protein belongs to the sphingomyelin synthase family. In terms of processing, palmitoylated on Cys-331, Cys-332, Cys-343 and Cys-348; which plays an important role in plasma membrane localization. As to expression, expression restricted to late round spermatids and elongating spermatids but not detected in late elongate spermatids and Sertoli cells (at protein level).

The protein localises to the cell membrane. It localises to the golgi apparatus membrane. The catalysed reaction is an N-acylsphing-4-enine + a 1,2-diacyl-sn-glycero-3-phosphocholine = a sphingomyelin + a 1,2-diacyl-sn-glycerol. It catalyses the reaction an N-acylsphinganine + a 1,2-diacyl-sn-glycero-3-phosphocholine = an N-acylsphinganine-1-phosphocholine + a 1,2-diacyl-sn-glycerol. It carries out the reaction an N-acyl-(4R)-4-hydroxysphinganine + a 1,2-diacyl-sn-glycero-3-phosphocholine = an N-acyl-(4R)-4-hydroxysphinganine-phosphocholine + a 1,2-diacyl-sn-glycerol. The enzyme catalyses an N-acylsphing-4-enine + a 1,2-diacyl-sn-glycero-3-phosphoethanolamine = an N-acylsphing-4-enine 1-phosphoethanolamine + a 1,2-diacyl-sn-glycerol. The catalysed reaction is an N-acylsphinganine + a 1,2-diacyl-sn-glycero-3-phosphoethanolamine = an N-acylsphinganine-1-phosphoethanolamine + a 1,2-diacyl-sn-glycerol. It catalyses the reaction an N-acyl-(4R)-4-hydroxysphinganine + a 1,2-diacyl-sn-glycero-3-phosphoethanolamine = an N-acyl-(4R)-4-hydroxysphinganine-1-phosphoethanolamine + a 1,2-diacyl-sn-glycerol. It carries out the reaction 1,2-dihexadecanoyl-sn-glycero-3-phosphocholine + an N-acylsphing-4-enine = 1,2-dihexadecanoyl-sn-glycerol + a sphingomyelin. The enzyme catalyses 1-(9Z-octadecenoyl)-2-acyl-sn-3-glycerol + a sphingomyelin = a 1-(9Z-octadecenoyl)-2-acyl-sn-glycero-3-phosphocholine + an N-acylsphing-4-enine. The catalysed reaction is N-hexadecanoylsphinganine + a 1,2-diacyl-sn-glycero-3-phosphocholine = N-hexadecanoyl-sphinganine-1-phosphocholine + a 1,2-diacyl-sn-glycerol. It catalyses the reaction N-hexadecanoyl-(4R)-hydroxysphinganine + a 1,2-diacyl-sn-glycero-3-phosphocholine = N-hexadecanoyl-(4R)-hydroxysphinganine-phosphocholine + a 1,2-diacyl-sn-glycerol. It carries out the reaction N-hexadecanoylsphinganine + a 1,2-diacyl-sn-glycero-3-phosphoethanolamine = N-hexadecanoyl-sphinganine-1-phosphoethanolamine + a 1,2-diacyl-sn-glycerol. The enzyme catalyses N-hexadecanoyl-(4R)-hydroxysphinganine + a 1,2-diacyl-sn-glycero-3-phosphoethanolamine = N-hexadecanoyl-(4R)-hydroxysphinganine-1-phosphoethanolamine + a 1,2-diacyl-sn-glycerol. Its pathway is sphingolipid metabolism. Functionally, sphingomyelin synthase that primarily contributes to sphingomyelin synthesis and homeostasis at the plasma membrane. Catalyzes the reversible transfer of phosphocholine moiety in sphingomyelin biosynthesis: in the forward reaction transfers phosphocholine head group of phosphatidylcholine (PC) on to ceramide (CER) to form ceramide phosphocholine (sphingomyelin, SM) and diacylglycerol (DAG) as by-product, and in the reverse reaction transfers phosphocholine from SM to DAG to form PC and CER. The direction of the reaction appears to depend on the levels of CER and DAG in the plasma membrane. Does not use free phosphorylcholine or CDP-choline as donors. Can also transfer phosphoethanolamine head group of phosphatidylethanolamine (PE) on to ceramide (CER) to form ceramide phosphoethanolamine (CPE). Regulates receptor-mediated signal transduction via mitogenic DAG and proapoptotic CER, as well as via SM, a structural component of membrane rafts that serve as platforms for signal transduction and protein sorting. To a lesser extent, plays a role in secretory transport via regulation of DAG pool at the Golgi apparatus and its downstream effects on PRKD1. Required for normal bone matrix mineralization. This chain is Phosphatidylcholine:ceramide cholinephosphotransferase 2 (Sgms2), found in Rattus norvegicus (Rat).